The sequence spans 75 residues: Protein myomixer (75 aa).

At 1-5 the chain is on the cytoplasmic side; sequence MPAVF. Residues 6–28 form a helical membrane-spanning segment; that stretch reads LLLRSLVVRLFGSRLAASGVQLL. Residues 29–75 lie on the Extracellular side of the membrane; sequence RRILTTATGHLGTVLRNIWERISSQQSKEAILGCVLCLLNMHKKVDN. Residues 58–67 carry the AxLyCxL motif; that stretch reads AILGCVLCLL.

The protein belongs to the MYMX family. Specifically expressed in the developing myotome.

The protein localises to the cell membrane. In terms of biological role, myoblast-specific protein that mediates myoblast fusion, an essential step for the formation of multi-nucleated muscle fibers. Involved in membrane fusion downstream of the lipid mixing step mediated by mymk. Acts by generating membrane stresses via its extracellular C-terminus, leading to drive fusion pore formation. This is Protein myomixer from Danio rerio (Zebrafish).